The chain runs to 443 residues: Threonine/serine transporter TdcC (443 aa).

11 consecutive transmembrane segments (helical) span residues 22 to 42 (TTWT…FFPI), 44 to 64 (AGFG…PIAF), 97 to 117 (GVVI…IYGV), 140 to 160 (FVAL…KDLM), 163 to 183 (VMSY…LSLI), 207 to 227 (ILIT…FSPI), 261 to 281 (MLMV…LSPA), 312 to 332 (AITL…KSFF), 366 to 386 (ISMI…PNIL), 389 to 409 (IEAM…MYAI), and 423 to 443 (DNVF…YKLF).

Belongs to the amino acid/polyamine transporter 2 family. SdaC/TdcC subfamily.

It is found in the cell inner membrane. It carries out the reaction L-threonine(in) + H(+)(in) = L-threonine(out) + H(+)(out). The catalysed reaction is L-serine(in) + H(+)(in) = L-serine(out) + H(+)(out). In terms of biological role, involved in the import of threonine and serine into the cell, with the concomitant import of a proton (symport system). The chain is Threonine/serine transporter TdcC from Escherichia coli O45:K1 (strain S88 / ExPEC).